The chain runs to 302 residues: Sulfate adenylyltransferase subunit 2 (302 aa).

This sequence belongs to the PAPS reductase family. CysD subfamily. In terms of assembly, heterodimer composed of CysD, the smaller subunit, and CysN.

The enzyme catalyses sulfate + ATP + H(+) = adenosine 5'-phosphosulfate + diphosphate. The protein operates within sulfur metabolism; hydrogen sulfide biosynthesis; sulfite from sulfate: step 1/3. Functionally, with CysN forms the ATP sulfurylase (ATPS) that catalyzes the adenylation of sulfate producing adenosine 5'-phosphosulfate (APS) and diphosphate, the first enzymatic step in sulfur assimilation pathway. APS synthesis involves the formation of a high-energy phosphoric-sulfuric acid anhydride bond driven by GTP hydrolysis by CysN coupled to ATP hydrolysis by CysD. This is Sulfate adenylyltransferase subunit 2 from Zymomonas mobilis subsp. mobilis (strain ATCC 31821 / ZM4 / CP4).